A 225-amino-acid polypeptide reads, in one-letter code: Ribose-5-phosphate isomerase A (225 aa).

Residues 26-29 (TGST), 82-85 (DGAD), and 95-98 (KGGG) contribute to the substrate site. Glutamate 104 functions as the Proton acceptor in the catalytic mechanism. Substrate is bound at residue lysine 122.

It belongs to the ribose 5-phosphate isomerase family. In terms of assembly, homodimer.

It catalyses the reaction aldehydo-D-ribose 5-phosphate = D-ribulose 5-phosphate. Its pathway is carbohydrate degradation; pentose phosphate pathway; D-ribose 5-phosphate from D-ribulose 5-phosphate (non-oxidative stage): step 1/1. Its function is as follows. Catalyzes the reversible conversion of ribose-5-phosphate to ribulose 5-phosphate. This chain is Ribose-5-phosphate isomerase A, found in Streptococcus sanguinis (strain SK36).